The primary structure comprises 428 residues: Sporulation kinase B (428 aa).

The Cytoplasmic portion of the chain corresponds to 1–6 (MEILKD). A helical transmembrane segment spans residues 7–27 (YLLHICFILFPILLYQVFWLG). Residues 28-37 (KPAILVPKIN) lie on the Extracellular side of the membrane. Residues 38–58 (SGLVTLFACGASVLCIIFPIH) form a helical membrane-spanning segment. The Cytoplasmic segment spans residues 59–68 (EMDYIQYGLQ). The helical transmembrane segment at 69–89 (MIPVIICLFYISTASGLTVAA) threads the bilayer. The Extracellular segment spans residues 90 to 99 (SVLCFELLFY). Residues 100–120 (EPSAMFVFTLLPFLIIIPILF) traverse the membrane as a helical segment. Residues 121–132 (QKKWPFMSKAKK) are Cytoplasmic-facing. The chain crosses the membrane as a helical span at residues 133–153 (LLLSLLISCVEIFLFFASSWI). At 154 to 166 (LSALNILNFQKSG) the chain is on the extracellular side. The helical transmembrane segment at 167-187 (IFVYEAAVSGLFRSSVLLLSI) threads the bilayer. Topologically, residues 188-428 (YIIESIAENI…TIKLPADLPH (241 aa)) are cytoplasmic. The region spanning 218 to 426 (SVAHEVRNPL…TVTIKLPADL (209 aa)) is the Histidine kinase domain. Residue His221 is modified to Phosphohistidine; by autocatalysis.

It is found in the cell membrane. It carries out the reaction ATP + protein L-histidine = ADP + protein N-phospho-L-histidine.. In terms of biological role, phosphorylates the sporulation-regulatory proteins spo0A and spo0F. Spo0F is required for the KinB activity. This Bacillus subtilis (strain 168) protein is Sporulation kinase B (kinB).